Consider the following 75-residue polypeptide: Anionic peptide (75 aa).

The first 24 residues, 1–24 (MVSKSLIVLLLVSVLVSTFYTSEA), serve as a signal peptide directing secretion.

The protein belongs to the non-disulfide-bridged peptide (NDBP) superfamily. Expressed by the venom gland.

The protein resides in the secreted. This Tityus discrepans (Venezuelan scorpion) protein is Anionic peptide.